Here is a 942-residue protein sequence, read N- to C-terminus: PH and SEC7 domain-containing protein C11E3.11c (942 aa).

Positions 1 to 18 (MSRNASNAYLKNGNSTPS) are enriched in polar residues. 2 disordered regions span residues 1–128 (MSRN…TRLN) and 259–308 (SRNL…ETTR). Low complexity predominate over residues 24–40 (PSSLSQRSKTSTRSSKP). Composition is skewed to polar residues over residues 50 to 60 (WFKNESSSRHP), 90 to 125 (ASMS…SSRT), 271 to 284 (YGNS…SSNY), and 292 to 305 (NRQS…STSE). One can recognise an SEC7 domain in the interval 295–497 (SSLSIPKSTS…LSSYKSFASN (203 aa)). The PH domain maps to 681–804 (PYIKQGILKF…WIDALNYWAA (124 aa)).

The chain is PH and SEC7 domain-containing protein C11E3.11c from Schizosaccharomyces pombe (strain 972 / ATCC 24843) (Fission yeast).